The following is a 291-amino-acid chain: Protease HtpX (291 aa).

The next 2 membrane-spanning stretches (helical) occupy residues 4–24 and 36–56; these read IALFLATNLAVMIVFSIVLNI and LSGLLVMAVLFGFGGSLISLM. Zn(2+) is bound at residue His143. Glu144 is a catalytic residue. His147 contributes to the Zn(2+) binding site. 2 helical membrane-spanning segments follow: residues 151–171 and 199–219; these read GDMITMTLMQGVVNTFVIFLS and FIVSTVLELAFGFLASFLTMW. A Zn(2+)-binding site is contributed by Glu225.

This sequence belongs to the peptidase M48B family. Zn(2+) is required as a cofactor.

The protein localises to the cell inner membrane. The chain is Protease HtpX from Aliivibrio fischeri (strain ATCC 700601 / ES114) (Vibrio fischeri).